The chain runs to 247 residues: Orotidine 5'-phosphate decarboxylase (247 aa).

Substrate contacts are provided by residues Asp-21, Lys-43, 70–79 (DMKFHDIPNT), Thr-129, Arg-190, Gln-199, Gly-219, and Arg-220. Catalysis depends on Lys-72, which acts as the Proton donor.

Belongs to the OMP decarboxylase family. Type 1 subfamily. In terms of assembly, homodimer.

The enzyme catalyses orotidine 5'-phosphate + H(+) = UMP + CO2. It functions in the pathway pyrimidine metabolism; UMP biosynthesis via de novo pathway; UMP from orotate: step 2/2. In terms of biological role, catalyzes the decarboxylation of orotidine 5'-monophosphate (OMP) to uridine 5'-monophosphate (UMP). This is Orotidine 5'-phosphate decarboxylase from Chromobacterium violaceum (strain ATCC 12472 / DSM 30191 / JCM 1249 / CCUG 213 / NBRC 12614 / NCIMB 9131 / NCTC 9757 / MK).